Reading from the N-terminus, the 588-residue chain is Proline--tRNA ligase (588 aa).

The protein belongs to the class-II aminoacyl-tRNA synthetase family. ProS type 1 subfamily. Homodimer.

It localises to the cytoplasm. The enzyme catalyses tRNA(Pro) + L-proline + ATP = L-prolyl-tRNA(Pro) + AMP + diphosphate. In terms of biological role, catalyzes the attachment of proline to tRNA(Pro) in a two-step reaction: proline is first activated by ATP to form Pro-AMP and then transferred to the acceptor end of tRNA(Pro). As ProRS can inadvertently accommodate and process non-cognate amino acids such as alanine and cysteine, to avoid such errors it has two additional distinct editing activities against alanine. One activity is designated as 'pretransfer' editing and involves the tRNA(Pro)-independent hydrolysis of activated Ala-AMP. The other activity is designated 'posttransfer' editing and involves deacylation of mischarged Ala-tRNA(Pro). The misacylated Cys-tRNA(Pro) is not edited by ProRS. This is Proline--tRNA ligase from Corynebacterium glutamicum (strain ATCC 13032 / DSM 20300 / JCM 1318 / BCRC 11384 / CCUG 27702 / LMG 3730 / NBRC 12168 / NCIMB 10025 / NRRL B-2784 / 534).